The following is a 91-amino-acid chain: UPF0250 protein PputGB1_4855 (91 aa).

Belongs to the UPF0250 family.

In Pseudomonas putida (strain GB-1), this protein is UPF0250 protein PputGB1_4855.